The chain runs to 381 residues: Cytochrome b (381 aa).

Transmembrane regions (helical) follow at residues F34–M54, W78–I99, W114–L134, and F179–L199. Positions 84 and 98 each coordinate heme b. Heme b-binding residues include H183 and H197. Residue H202 participates in a ubiquinone binding. Helical transmembrane passes span Y227–M247, L289–H309, M321–G341, and F348–P368.

This sequence belongs to the cytochrome b family. As to quaternary structure, the cytochrome bc1 complex contains 3 respiratory subunits (MT-CYB, CYC1 and UQCRFS1), 2 core proteins (UQCRC1 and UQCRC2) and probably 6 low-molecular weight proteins. The cofactor is heme b.

It is found in the mitochondrion inner membrane. Functionally, component of the ubiquinol-cytochrome c reductase complex (complex III or cytochrome b-c1 complex) that is part of the mitochondrial respiratory chain. The b-c1 complex mediates electron transfer from ubiquinol to cytochrome c. Contributes to the generation of a proton gradient across the mitochondrial membrane that is then used for ATP synthesis. This is Cytochrome b (mt-cyb) from Carcharhinus porosus (Smalltail shark).